We begin with the raw amino-acid sequence, 472 residues long: Chromosomal replication initiator protein DnaA (472 aa).

Residues 1–73 (MSNMEQDRWS…LSCWQAELPE (73 aa)) are domain I, interacts with DnaA modulators. The segment at 73–128 (EVNRVDLTVRSPVRCAAPAKEAPAPVESRRDEQRPSAERSNGATPVSANHDALGGS) is domain II. Positions 89–124 (APAKEAPAPVESRRDEQRPSAERSNGATPVSANHDA) are disordered. A compositionally biased stretch (basic and acidic residues) spans 99–109 (ESRRDEQRPSA). Residues 110 to 119 (ERSNGATPVS) are compositionally biased toward polar residues. Residues 129-351 (PLDPRLTFAS…GAINRLLAHS (223 aa)) form a domain III, AAA+ region region. Residues Gly-176, Gly-178, Lys-179, and Thr-180 each contribute to the ATP site. The segment at 352 to 472 (KLNNQPVTLE…VESLKRQLQE (121 aa)) is domain IV, binds dsDNA.

This sequence belongs to the DnaA family. Oligomerizes as a right-handed, spiral filament on DNA at oriC.

The protein resides in the cytoplasm. Its function is as follows. Plays an essential role in the initiation and regulation of chromosomal replication. ATP-DnaA binds to the origin of replication (oriC) to initiate formation of the DNA replication initiation complex once per cell cycle. Binds the DnaA box (a 9 base pair repeat at the origin) and separates the double-stranded (ds)DNA. Forms a right-handed helical filament on oriC DNA; dsDNA binds to the exterior of the filament while single-stranded (ss)DNA is stabiized in the filament's interior. The ATP-DnaA-oriC complex binds and stabilizes one strand of the AT-rich DNA unwinding element (DUE), permitting loading of DNA polymerase. After initiation quickly degrades to an ADP-DnaA complex that is not apt for DNA replication. Binds acidic phospholipids. This Rhodopseudomonas palustris (strain TIE-1) protein is Chromosomal replication initiator protein DnaA.